The chain runs to 548 residues: Adenine deaminase (548 aa).

Belongs to the metallo-dependent hydrolases superfamily. Adenine deaminase family. It depends on Mn(2+) as a cofactor.

The catalysed reaction is adenine + H2O + H(+) = hypoxanthine + NH4(+). This is Adenine deaminase from Borreliella afzelii (strain PKo) (Borrelia afzelii).